The following is a 106-amino-acid chain: Small ribosomal subunit protein uS10 (106 aa).

It belongs to the universal ribosomal protein uS10 family. Part of the 30S ribosomal subunit.

Its function is as follows. Involved in the binding of tRNA to the ribosomes. This Caldicellulosiruptor bescii (strain ATCC BAA-1888 / DSM 6725 / KCTC 15123 / Z-1320) (Anaerocellum thermophilum) protein is Small ribosomal subunit protein uS10.